The chain runs to 212 residues: Large ribosomal subunit protein uL3 (212 aa).

Residues 135-155 (ATHGNSVSHRAHGSTGQNQSP) are compositionally biased toward polar residues. The disordered stretch occupies residues 135–162 (ATHGNSVSHRAHGSTGQNQSPGKVFKGK). The residue at position 153 (Q153) is an N5-methylglutamine.

This sequence belongs to the universal ribosomal protein uL3 family. As to quaternary structure, part of the 50S ribosomal subunit. Forms a cluster with proteins L14 and L19. Methylated by PrmB.

In terms of biological role, one of the primary rRNA binding proteins, it binds directly near the 3'-end of the 23S rRNA, where it nucleates assembly of the 50S subunit. This Psychrobacter arcticus (strain DSM 17307 / VKM B-2377 / 273-4) protein is Large ribosomal subunit protein uL3.